We begin with the raw amino-acid sequence, 139 residues long: MRHGKVHRKFNRTAEHRKAMFANLAGALITHEQIVTTLPKAKDLRPVVEKLVTLARRGDLHARRQAIAELRDLNVVKKLFDVLAKRYEGRPGGYTRIIKAGFRYGDSTPVAVIEFVDRDVDAKGAADRARAEAAEAVAA.

Belongs to the bacterial ribosomal protein bL17 family. Part of the 50S ribosomal subunit. Contacts protein L32.

This Azorhizobium caulinodans (strain ATCC 43989 / DSM 5975 / JCM 20966 / LMG 6465 / NBRC 14845 / NCIMB 13405 / ORS 571) protein is Large ribosomal subunit protein bL17.